Consider the following 601-residue polypeptide: Elongation factor 4 (601 aa).

A tr-type G domain is found at 6-188; sequence AHIRNFSIIA…QIVRKVPPPK (183 aa). GTP-binding positions include 18–23 and 135–138; these read DHGKST and NKVD.

This sequence belongs to the TRAFAC class translation factor GTPase superfamily. Classic translation factor GTPase family. LepA subfamily.

The protein localises to the cell inner membrane. It carries out the reaction GTP + H2O = GDP + phosphate + H(+). Its function is as follows. Required for accurate and efficient protein synthesis under certain stress conditions. May act as a fidelity factor of the translation reaction, by catalyzing a one-codon backward translocation of tRNAs on improperly translocated ribosomes. Back-translocation proceeds from a post-translocation (POST) complex to a pre-translocation (PRE) complex, thus giving elongation factor G a second chance to translocate the tRNAs correctly. Binds to ribosomes in a GTP-dependent manner. The polypeptide is Elongation factor 4 (Anaeromyxobacter sp. (strain Fw109-5)).